Here is a 7839-residue protein sequence, read N- to C-terminus: Nonribosomal peptide synthetase GRA1 (7839 aa).

Polar residues predominate over residues 1–23 (MALLNGKSTLPNGHNSSIESPNG). A disordered region spans residues 1–26 (MALLNGKSTLPNGHNSSIESPNGYTE). The interval 264–650 (LASPNSCAVH…LGRIDDQVKI (387 aa)) is adenylation 1. One can recognise a Carrier 1 domain in the interval 793-866 (SAEALVLRQL…LQAEMSEKKK (74 aa)). At serine 827 the chain carries O-(pantetheine 4'-phosphoryl)serine. The condensation 1 stretch occupies residues 916 to 1332 (DIYPASPLQE…ILSPSDVAQI (417 aa)). The tract at residues 1351–1742 (FFTQVKRSPD…QRKDAQLKIR (392 aa)) is adenylation 2. The 78-residue stretch at 1880–1957 (ELETEAERTM…AMSRQATVSD (78 aa)) folds into the Carrier 2 domain. Serine 1918 carries the post-translational modification O-(pantetheine 4'-phosphoryl)serine. Positions 1997 to 2413 (DLYPCTPFQE…LISPSDMETI (417 aa)) are condensation 2. Residues 2432-2828 (FDRRLSQKHS…GRRDTQLKIR (397 aa)) are adenylation 3. A Carrier 3 domain is found at 2963–3040 (IPTTQMEWNL…DLAQAIVLDT (78 aa)). Serine 3001 carries the post-translational modification O-(pantetheine 4'-phosphoryl)serine. The segment at 3084–3496 (DIYPCTPLQD…QVDLISDSDH (413 aa)) is condensation 3. Positions 3520-3923 (RLAVSNPDAE…GRRDSQVKLR (404 aa)) are adenylation 4. A Carrier 4 domain is found at 4057–4134 (RPLTEREKDL…DMAAMTTSLS (78 aa)). Serine 4095 is modified (O-(pantetheine 4'-phosphoryl)serine). A condensation 4 region spans residues 4234–4569 (NLEEFVGRQS…MMNPDDAEEI (336 aa)). Residues 4591-4982 (HSKGCPDRIA…VSRKDTQVKF (392 aa)) form an adenylation 5 region. One can recognise a Carrier 5 domain in the interval 5113–5189 (ALSSDEESQL…DMALCMTSAQ (77 aa)). Position 5150 is an O-(pantetheine 4'-phosphoryl)serine (serine 5150). The tract at residues 5224-5653 (EDIYPCSALQ…VSPSDQAEIL (430 aa)) is condensation 5. The interval 5671–6069 (FESRARLQPS…GRRDTQVKLR (399 aa)) is adenylation 6. In terms of domain architecture, Carrier 6 spans 6207–6282 (FPSSLAEQQM…HMAAIATTFT (76 aa)). An O-(pantetheine 4'-phosphoryl)serine modification is found at serine 6243. Residues 6321-6730 (QDIYPCSALQ…RLADMDLTGP (410 aa)) form a condensation 6 region. Residues 6756–7147 (EQRVKSQPDS…LGRKDSQIKL (392 aa)) form an adenylation 7 region. Positions 7290 to 7366 (KAATPNEKTL…DLARVSRQSI (77 aa)) constitute a Carrier 7 domain. Serine 7327 carries the post-translational modification O-(pantetheine 4'-phosphoryl)serine. Positions 7404–7704 (HDIYPCTQVQ…LDYAKKRASS (301 aa)) are condensation7.

The protein belongs to the NRP synthetase family.

It functions in the pathway mycotoxin biosynthesis. Nonribosomal peptide synthetase; part of the gene cluster that mediates the biosynthesis of gramillins A and B, bicyclic lipopeptides that induce cell death in maize leaves but not in wheat leaves. The nonribosomal peptide synthetase GRA1 incorporates respectively a glutamic adic (Glu), a leucine (Leu), a serine (Ser), a hydroxyglutamine (HOGln), a 2-amino decanoic acid, and 2 cysteins (CysB and CysA). The biosynthesis of 2-amino decanoic acid incorporated in gramillins could be initiated by a fatty acid synthase composed of the alpha and beta subunits FGSG_00036 and FGSG_11656. The cytochrome P450 monooxygenase FGSG_15680 could hydroxylate the fatty acid chain. Subsequent oxidation to the ketone by the oxidoreductase FGSG_00048 and transamination by aminotransferase FGSG_00049 could form 2-amino-decanoic acid. On the other hand, FGSG_15680 could also be responsible for the HO-modified glutamine at the gamma-position. Whether hydroxylation occurs on the fully assembled product or on the Gln residue prior to assembly into the gramillins requires further proof. The thioredoxin FGSG_00043 could also be required for the disulfide-bond formation between CysA and CysB. The specific involvement of the remaining proteins from the cluster is more difficult to discern, but could have broader regulatory (FGSG_00040 and FGSG_11657) or enzymatic functions (FGSG_00044 and FGSG_00045). The final C-domain of GRA1 does not possess the expected sequence of a termination CT domain, often implicated in macrocyclization and release of a cyclopeptidein fungal NRPs; and the thioesterase FGSG_00047 may act in concert with the terminal C-domain of GRA1 to catalyze the formation of the macrocyclic anhydride and release of the products. In Gibberella zeae (strain ATCC MYA-4620 / CBS 123657 / FGSC 9075 / NRRL 31084 / PH-1) (Wheat head blight fungus), this protein is Nonribosomal peptide synthetase GRA1.